Consider the following 73-residue polypeptide: Translation initiation factor IF-1 (73 aa).

Residues 1–73 (MAKKDGAIEI…TRGRIVYRYK (73 aa)) enclose the S1-like domain.

It belongs to the IF-1 family. In terms of assembly, component of the 30S ribosomal translation pre-initiation complex which assembles on the 30S ribosome in the order IF-2 and IF-3, IF-1 and N-formylmethionyl-tRNA(fMet); mRNA recruitment can occur at any time during PIC assembly.

The protein localises to the cytoplasm. Its function is as follows. One of the essential components for the initiation of protein synthesis. Stabilizes the binding of IF-2 and IF-3 on the 30S subunit to which N-formylmethionyl-tRNA(fMet) subsequently binds. Helps modulate mRNA selection, yielding the 30S pre-initiation complex (PIC). Upon addition of the 50S ribosomal subunit IF-1, IF-2 and IF-3 are released leaving the mature 70S translation initiation complex. This is Translation initiation factor IF-1 from Thermobifida fusca (strain YX).